The chain runs to 207 residues: METKEKVQIDWKVVFKLGLILFVISAVAACALALTNYVTAGTIEEMNVQTNTVARQEVLPKAADFEAVPAKDVEKIASEIGMEKPEELLEVYIGKSNGEVVGYTVKTGPTSGYAGEVQVLTGISADGVITGITIIKSNETPGLGAKASGVWNDQFTGKSAKEELVVVKGTTKEGSNEIQAITGSTITSKAVTSGVNMSIQVYQNLSK.

A helical transmembrane segment spans residues 18-38 (GLILFVISAVAACALALTNYV). Residue T185 is modified to FMN phosphoryl threonine.

It belongs to the RnfG family. The complex is composed of six subunits: RnfA, RnfB, RnfC, RnfD, RnfE and RnfG. The cofactor is FMN.

It localises to the cell membrane. The enzyme catalyses 2 reduced [2Fe-2S]-[ferredoxin] + Na(+)(in) + NAD(+) + H(+) = 2 oxidized [2Fe-2S]-[ferredoxin] + Na(+)(out) + NADH. Its function is as follows. Part of a membrane-bound complex that couples electron transfer with translocation of ions across the membrane. Couples electron transfer from reduced ferredoxin to NAD(+) with electrogenic movement of Na(+) out of the cell. Involved in caffeate respiration. The protein is Na(+)-translocating ferredoxin:NAD(+) oxidoreductase complex subunit G of Acetobacterium woodii (strain ATCC 29683 / DSM 1030 / JCM 2381 / KCTC 1655 / WB1).